The chain runs to 173 residues: Mesencephalic astrocyte-derived neurotrophic factor homolog (173 aa).

The signal sequence occupies residues 1 to 22 (MKTWYMVVVIGFLATLVQTSLA). 4 disulfides stabilise this stretch: Cys-28–Cys-114, Cys-31–Cys-103, Cys-61–Cys-72, and Cys-148–Cys-151.

The protein belongs to the ARMET family.

The protein resides in the secreted. Required during the maturation of the embryonic nervous system for maintenance of neuronal and cuticular connectivity. Essential for maintenance of dopaminergic neurons and dopamine levels. This is Mesencephalic astrocyte-derived neurotrophic factor homolog from Drosophila yakuba (Fruit fly).